The following is a 493-amino-acid chain: Glutamate synthase [NADPH] small chain (493 aa).

An NADP(+)-binding site is contributed by 299–313; sequence GGGDTGADCVATALR.

It belongs to the glutamate synthase family. Aggregate of 4 catalytic active heterodimers, consisting of a large and a small subunit.

It catalyses the reaction 2 L-glutamate + NADP(+) = L-glutamine + 2-oxoglutarate + NADPH + H(+). It participates in amino-acid biosynthesis; L-glutamate biosynthesis via GLT pathway; L-glutamate from 2-oxoglutarate and L-glutamine (NADP(+) route): step 1/1. The protein operates within energy metabolism; nitrogen metabolism. The sequence is that of Glutamate synthase [NADPH] small chain (gltB) from Bacillus subtilis (strain 168).